Here is a 1058-residue protein sequence, read N- to C-terminus: Ubiquitin-like modifier-activating enzyme 1 (1058 aa).

Residues Met-1 to Glu-47 form a disordered region. Residue Ser-2 is modified to N-acetylserine. Phosphoserine occurs at positions 4, 13, 21, 24, and 46. Residues Ser-21–Thr-38 show a composition bias toward polar residues. Tyr-55 bears the Phosphotyrosine mark. Repeat copies occupy residues Gly-63–Phe-199 and Gly-459–Ile-611. Positions Gly-63–Ile-611 are 2 approximate repeats. ATP contacts are provided by residues Ala-478, Asp-504, Arg-515, Lys-528, and Asp-576–Asn-577. An N6-succinyllysine modification is found at Lys-528. Residue Cys-632 is the Glycyl thioester intermediate of the active site. The residue at position 671 (Lys-671) is an N6-acetyllysine. At Thr-800 the chain carries Phosphothreonine. A phosphoserine mark is found at Ser-810, Ser-816, Ser-820, and Ser-835. The residue at position 980 (Lys-980) is an N6-acetyllysine.

The protein belongs to the ubiquitin-activating E1 family. Monomer. As to expression, ubiquitous.

Its subcellular location is the cytoplasm. The protein localises to the mitochondrion. It localises to the nucleus. It catalyses the reaction ATP + ubiquitin + [E1 ubiquitin-activating enzyme]-L-cysteine = AMP + diphosphate + S-ubiquitinyl-[E1 ubiquitin-activating enzyme]-L-cysteine.. The protein operates within protein modification; protein ubiquitination. Its function is as follows. Catalyzes the first step in ubiquitin conjugation to mark cellular proteins for degradation through the ubiquitin-proteasome system. Activates ubiquitin by first adenylating its C-terminal glycine residue with ATP, and thereafter linking this residue to the side chain of a cysteine residue in E1, yielding a ubiquitin-E1 thioester and free AMP. Essential for the formation of radiation-induced foci, timely DNA repair and for response to replication stress. Promotes the recruitment of TP53BP1 and BRCA1 at DNA damage sites. This is Ubiquitin-like modifier-activating enzyme 1 (UBA1) from Oryctolagus cuniculus (Rabbit).